Here is an 810-residue protein sequence, read N- to C-terminus: DNA-binding protein REB1 (810 aa).

2 stretches are compositionally biased toward basic and acidic residues: residues 1–10 (MPSGHNDKNA) and 29–44 (HQNH…LENK). Disordered regions lie at residues 1–80 (MPSG…ENIS), 114–161 (NQQD…GVDD), 180–243 (NNNN…TNND), 294–313 (HGLN…LSNS), and 346–365 (QDTQ…AGSV). Low complexity-rich tracts occupy residues 51–64 (IVES…NNND) and 124–135 (NNNTDNGNDSNN). Positions 149-161 (DKNKKDAGVGVDD) are enriched in basic and acidic residues. Residues 180–191 (NNNNNNSIANDS) are compositionally biased toward low complexity. A compositionally biased stretch (basic and acidic residues) spans 198–208 (HDNGNNHENSQ). Over residues 346 to 355 (QDTQPHQQKS) the composition is skewed to polar residues. Ser-355 carries the phosphoserine modification. The HTH myb-type domain maps to 470–523 (HIFEQRGKWTAEEEQELAKLCAEKEGQWAEIGKTLGRMPEDCRDRWRNYVKCGT). Residues 497 to 519 (WAEIGKTLGRMPEDCRDRWRNYV) constitute a DNA-binding region (H-T-H motif). The segment at 572–667 (QNDHRNNDED…STHSKSLSNT (96 aa)) is disordered. A compositionally biased stretch (low complexity) spans 586–606 (ASAAAAAAAAIQEQQQLLQQK). The span at 627-636 (DNKDEDKPHD) shows a compositional bias: basic and acidic residues. The segment covering 643 to 667 (DDNSQNSMVPAPSATSTHSKSLSNT) has biased composition (polar residues). The Myb-like domain maps to 692–717 (NWTIVSERMGGTRSRIQCRYKWNKLV). Residue Lys-807 forms a Glycyl lysine isopeptide (Lys-Gly) (interchain with G-Cter in SUMO) linkage.

It is found in the nucleus. DNA-binding protein that recognizes sites within both the enhancer and the promoter of rRNA transcription, as well as upstream of many genes transcribed by RNA polymerase II. It is essential for cell growth. May stimulate or inhibit transcription. Specifically recognizes the sequence 5'-CCGGGTA-3' or 5'-CGGGTRR-3' (where R is any purine). A member of the general regulatory factors (GRFs) which act as genome partitioners. Acts as a chromatin insulator which are known as STARs (Subtelomeric anti-silencing region). STARs prevent negative or positive transcription influence by extending across chromatin to a promoter. The protein is DNA-binding protein REB1 (REB1) of Saccharomyces cerevisiae (strain ATCC 204508 / S288c) (Baker's yeast).